The chain runs to 452 residues: GTPase Der (452 aa).

EngA-type G domains lie at 4–169 (PIVA…PPPE) and 177–352 (IKVA…EEHR). GTP contacts are provided by residues 10–17 (GRPNVGKS), 57–61 (DTGGL), 120–123 (NKCE), 183–190 (GRPNVGKS), 230–234 (DTAGI), and 295–298 (NKWD). One can recognise a KH-like domain in the interval 353 to 438 (RRVTTAVINE…PIRLLWRGKK (86 aa)).

It belongs to the TRAFAC class TrmE-Era-EngA-EngB-Septin-like GTPase superfamily. EngA (Der) GTPase family. Associates with the 50S ribosomal subunit.

GTPase that plays an essential role in the late steps of ribosome biogenesis. The chain is GTPase Der from Rippkaea orientalis (strain PCC 8801 / RF-1) (Cyanothece sp. (strain PCC 8801)).